A 755-amino-acid chain; its full sequence is Ribosome biogenesis protein BOP1 (755 aa).

2 stretches are compositionally biased toward polar residues: residues 1 to 10 and 43 to 61; these read MSQEPSSSFS and ELSS…TEPN. Positions 1 to 65 are disordered; the sequence is MSQEPSSSFS…PLTEPNNIPI (65 aa). The segment at 309–754 is interaction with EB1; the sequence is MDSMLPTLPN…SGTDGVLRLF (446 aa). The stretch at 335-374 is one WD 1 repeat; it reads TGTRRINGLTFSPKGMFFAVGGRDCILRVFETYSGRQVRA. The disordered stretch occupies residues 482-505; sequence YNEGSEDDDAAESARFNEERHQRG. A compositionally biased stretch (basic and acidic residues) spans 496 to 505; it reads RFNEERHQRG. WD repeat units follow at residues 617-655, 659-698, and 725-755; these read PGVK…EPTA, YHTS…LVKM, and DGSV…RLFK.

Belongs to the WD repeat BOP1/ERB1 family. In terms of assembly, interacts (via C-terminal WD repeats) with giardin subunit beta. Interacts (via C-terminal WD repeats) with EB1.

Its subcellular location is the nucleus. It localises to the nucleolus. The protein resides in the nucleus membrane. In terms of biological role, required for maturation of ribosomal RNAs and formation of the large ribosomal subunit. The sequence is that of Ribosome biogenesis protein BOP1 from Giardia intestinalis (Giardia lamblia).